Consider the following 607-residue polypeptide: Chaperone protein DnaK (607 aa).

A Phosphothreonine; by autocatalysis modification is found at T173. Basic and acidic residues-rich tracts occupy residues E490–A509 and G524–L542. 3 disordered regions span residues E490–D510, G524–K555, and Q574–K607. Residues Q574–S587 show a composition bias toward polar residues. Over residues T595 to K607 the composition is skewed to basic and acidic residues.

This sequence belongs to the heat shock protein 70 family.

Its function is as follows. Acts as a chaperone. This is Chaperone protein DnaK from Staphylococcus carnosus (strain TM300).